The sequence spans 129 residues: uncharacterized protein (129 aa).

Residues 84–98 (QKTVSKKYKSRKGRR) show a composition bias toward basic residues. A disordered region spans residues 84–129 (QKTVSKKYKSRKGRRYTRERNISSEKNKTDKSHKVRVGKIQNINND). Over residues 99–115 (YTRERNISSEKNKTDKS) the composition is skewed to basic and acidic residues.

This is an uncharacterized protein from Acanthamoeba polyphaga mimivirus (APMV).